The following is a 131-amino-acid chain: Small ribosomal subunit protein uS8 (131 aa).

This sequence belongs to the universal ribosomal protein uS8 family. In terms of assembly, part of the 30S ribosomal subunit. Contacts proteins S5 and S12.

Its function is as follows. One of the primary rRNA binding proteins, it binds directly to 16S rRNA central domain where it helps coordinate assembly of the platform of the 30S subunit. The protein is Small ribosomal subunit protein uS8 of Mesomycoplasma hyopneumoniae (strain 7448) (Mycoplasma hyopneumoniae).